A 1162-amino-acid polypeptide reads, in one-letter code: MEPEEERIRYSQRLRGTMRRRYEDDGISDDEIEGKRTFDLEEKLHTNKYNANFVTFMEGKDFNVEYIQRGGLRDPLIFKNSDGLGIKMPDPDFTVNDVKMCVGSRRMVDVMDVNTQKGIEMTMAQWTRYYETPEEEREKLYNVISLEFSHTRLENMVQRPSTVDFIDWVDNMWPRHLKESQTESTNAILEMQYPKVQKYCLMSVRGCYTDFHVDFGGTSVWYHIHQGGKVFWLIPPTAHNLELYENWLLSGKQGDIFLGDRVSDCQRIELKQGYTFVIPSGWIHAVYTPTDTLVFGGNFLHSFNIPMQLKIYNIEDRTRVPNKFRYPFYYEMCWYVLERYVYCITNRSHLTKEFQKESLSMDLELNGLESGNGDEEAVDREPRRLSSRRSVLTSPVANGVNLDYDGLGKTCRSLPSLKKTLAGDSSSDCSRGSHNGQVWDPQCAPRKDRQVHLTHFELEGLRCLVDKLESLPLHKKCVPTGIEDEDALIADVKILLEELANSDPKLALTGVPIVQWPKRDKLKFPTRPKVRVPTIPITKPHTMKPAPRLTPVRPAAASPIVSGARRRRVRCRKCKACVQGECGVCHYCRDMKKFGGPGRMKQSCVLRQCLAPRLPHSVTCSLCGEVDQNEETQDFEKKLMECCICNEIVHPGCLQMDGEGLLNEELPNCWECPKCYQEDSSEKAQKRKMEESDEEAVQAKVLRPLRSCDEPLTPPPHSPTSMLQLIHDPVSPRGMVTRSSPGAGPSDHHSASRDERFKRRQLLRLQATERTMVREKENNPSGKKELSEVEKAKIRGSYLTVTLQRPTKELHGTSIVPKLQAITASSANLRHSPRVLVQHCPARTPQRGDEEGLGGEEEEEEEEEEEDDSAEEGGAARLNGRGSWAQDGDESWMQREVWMSVFRYLSRRELCECMRVCKTWYKWCCDKRLWTKIDLSRCKAIVPQALSGIIKRQPVSLDLSWTNISKKQLTWLVNRLPGLKDLLLAGCSWSAVSALSTSSCPLLRTLDLRWAVGIKDPQIRDLLTPPADKPGQDNRSKLRNMTDFRLAGLDITDATLRLIIRHMPLLSRLDLSHCSHLTDQSSNLLTAVGSSTRYSLTELNMAGCNKLTDQTLIYLRRIANVTLIDLRGCKQITRKACEHFISDLSINSLYCLSDEKLIQKIS.

Residue Ser-28 is modified to Phosphoserine. The 169-residue stretch at 148–316 (FSHTRLENMV…MQLKIYNIED (169 aa)) folds into the JmjC domain. Position 209 (Thr-209) interacts with substrate. 2 residues coordinate Fe cation: His-212 and Asp-214. Lys-229 contributes to the substrate binding site. His-284 is a Fe cation binding site. The segment at 367 to 389 (GLESGNGDEEAVDREPRRLSSRR) is disordered. Residues Ser-390 and Ser-394 each carry the phosphoserine modification. Residue Lys-505 forms a Glycyl lysine isopeptide (Lys-Gly) (interchain with G-Cter in SUMO2) linkage. The tract at residues 532 to 557 (VPTIPITKPHTMKPAPRLTPVRPAAA) is disordered. Thr-550 carries the phosphothreonine modification. At Ser-558 the chain carries Phosphoserine. The CXXC-type zinc finger occupies 564–610 (ARRRRVRCRKCKACVQGECGVCHYCRDMKKFGGPGRMKQSCVLRQCL). Positions 571, 574, 577, 582, 585, 588, 604, 609, 620, and 623 each coordinate Zn(2+). The PHD-type zinc-finger motif lies at 617–678 (SVTCSLCGEV…CWECPKCYQE (62 aa)). Thr-632 is modified (phosphothreonine). Residues Cys-642, Cys-645, His-650, Cys-653, Cys-672, and Cys-675 each coordinate Zn(2+). Ser-692 bears the Phosphoserine mark. Residues 704–789 (PLRSCDEPLT…PSGKKELSEV (86 aa)) form a disordered region. Phosphothreonine is present on Thr-713. Phosphoserine is present on residues Ser-718 and Ser-731. 2 stretches are compositionally biased toward basic and acidic residues: residues 746-757 (SDHHSASRDERF) and 771-789 (TMVREKENNPSGKKELSEV). Phosphoserine is present on residues Ser-825, Ser-832, Ser-869, and Ser-883. The interval 839–887 (HCPARTPQRGDEEGLGGEEEEEEEEEEEDDSAEEGGAARLNGRGSWAQD) is disordered. Positions 851–871 (EGLGGEEEEEEEEEEEDDSAE) are enriched in acidic residues. Positions 889–936 (DESWMQREVWMSVFRYLSRRELCECMRVCKTWYKWCCDKRLWTKIDLS) constitute an F-box domain. LRR repeat units lie at residues 961–982 (WTNISKKQLTWLVNRLPGLKDL) and 984–1010 (LAGCSWSAVSALSTSSCPLLRTLDLRW). Position 1020 is an ADP-ribosylarginine (Arg-1020). 4 LRR repeats span residues 1048 to 1073 (GLDITDATLRLIIRHMPLLSRLDLSH), 1074 to 1103 (CSHLTDQSSNLLTAVGSSTRYSLTELNMAG), 1104 to 1128 (CNKLTDQTLIYLRRIANVTLIDLRG), and 1129 to 1156 (CKQITRKACEHFISDLSINSLYCLSDEK).

It belongs to the JHDM1 histone demethylase family. As to quaternary structure, interacts with CBX5/HP1A; the interaction promotes CBX5 localization to chromatin. The SKP1-KDM2A complex interacts with UBB. Part of a SCF (SKP1-cullin-F-box) protein ligase complex. Requires Fe(2+) as cofactor. In terms of processing, mono-ADP-ribosylated at Arg-1020 in response to DNA damage, leading to displacement from chromatin, resulting in increased dimethylation of histone H3 at 'Lys-36'. As to expression, widely expressed, with highest levels in brain, testis and ovary, followed by lung.

The protein resides in the nucleus. The protein localises to the nucleoplasm. Its subcellular location is the chromosome. It carries out the reaction N(6),N(6)-dimethyl-L-lysyl(36)-[histone H3] + 2 2-oxoglutarate + 2 O2 = L-lysyl(36)-[histone H3] + 2 formaldehyde + 2 succinate + 2 CO2. Histone demethylase that specifically demethylates 'Lys-36' of histone H3, thereby playing a central role in histone code. Preferentially demethylates dimethylated H3 'Lys-36' residue while it has weak or no activity for mono- and tri-methylated H3 'Lys-36'. May also recognize and bind to some phosphorylated proteins and promote their ubiquitination and degradation. Required to maintain the heterochromatic state. Associates with centromeres and represses transcription of small non-coding RNAs that are encoded by the clusters of satellite repeats at the centromere. Required to sustain centromeric integrity and genomic stability, particularly during mitosis. Regulates circadian gene expression by repressing the transcriptional activator activity of CLOCK-BMAL1 heterodimer and RORA in a catalytically-independent manner. The sequence is that of Lysine-specific demethylase 2A (KDM2A) from Homo sapiens (Human).